The chain runs to 176 residues: ATP-dependent protease subunit HslV (176 aa).

Residue Thr-4 is part of the active site. Ala-159, Cys-162, and Thr-165 together coordinate Na(+).

Belongs to the peptidase T1B family. HslV subfamily. In terms of assembly, a double ring-shaped homohexamer of HslV is capped on each side by a ring-shaped HslU homohexamer. The assembly of the HslU/HslV complex is dependent on binding of ATP.

It is found in the cytoplasm. The catalysed reaction is ATP-dependent cleavage of peptide bonds with broad specificity.. With respect to regulation, allosterically activated by HslU binding. Protease subunit of a proteasome-like degradation complex believed to be a general protein degrading machinery. The polypeptide is ATP-dependent protease subunit HslV (Wolbachia sp. subsp. Brugia malayi (strain TRS)).